Consider the following 312-residue polypeptide: Olfactory receptor 2J2 (312 aa).

The Extracellular portion of the chain corresponds to 1-26 (MMIKKNASSEDFFILLGFSNWPQLEV). Residue N6 is glycosylated (N-linked (GlcNAc...) asparagine). Residues 27–50 (VLFVVILIFYLMTLTGNLFIIILS) traverse the membrane as a helical segment. The Cytoplasmic segment spans residues 51–58 (YVDSHLHT). The chain crosses the membrane as a helical span at residues 59 to 80 (PMYFFLSNLSFLDLCHTTSSIP). The Extracellular segment spans residues 81-101 (QLLVNLRGPEKTISYAGCMVQ). C98 and C190 are joined by a disulfide. Residues 102–121 (LYFVLALGIAECVLLVVMSY) form a helical membrane-spanning segment. The Cytoplasmic portion of the chain corresponds to 122-140 (DRYVAVCRPLHYTVLMHPR). Residues 141–159 (FCHLLAAASWVIGFTISAL) traverse the membrane as a helical segment. The Extracellular segment spans residues 160 to 196 (HSSFTFWVPLCGHRLVDHFFCEVPALLRLSCVDTHAN). A helical membrane pass occupies residues 197–220 (ELTLMVMSSIFVLIPLILILTAYG). Residues 221-237 (AIARAVLSMQSTTGLQK) lie on the Cytoplasmic side of the membrane. A helical transmembrane segment spans residues 238–260 (VFRTCGAHLMVVSLFFIPVMCMY). Topologically, residues 261 to 273 (LQPPSENSPDQGK) are extracellular. The chain crosses the membrane as a helical span at residues 274–293 (FIALFYTVVTPSLNPLIYTL). Over 294–312 (RNKHVKGAAKRLLGWEWGK) the chain is Cytoplasmic.

The protein belongs to the G-protein coupled receptor 1 family.

Its subcellular location is the cell membrane. Its function is as follows. Odorant receptor. The sequence is that of Olfactory receptor 2J2 (OR2J2) from Homo sapiens (Human).